A 199-amino-acid polypeptide reads, in one-letter code: Recombination protein RecR (199 aa).

Residues 57–72 (CQSCRTFTEETYCPIC) form a C4-type zinc finger. The region spanning 81-176 (DIICVVETPA…MVSRIAHGVP (96 aa)) is the Toprim domain.

The protein belongs to the RecR family.

May play a role in DNA repair. It seems to be involved in an RecBC-independent recombinational process of DNA repair. It may act with RecF and RecO. In Shewanella halifaxensis (strain HAW-EB4), this protein is Recombination protein RecR.